The following is a 361-amino-acid chain: dTDP-glucose 4,6-dehydratase 1 (361 aa).

NAD(+)-binding positions include 11 to 12 (FI), 32 to 35 (DKLT), 58 to 59 (DI), 80 to 84 (LAAES), and T99. S84 lines the substrate pocket. T133 contacts substrate. Catalysis depends on D134, which acts as the Proton donor. Active-site proton acceptor residues include E135 and Y167. 167 to 171 (YSASK) is a binding site for NAD(+). N196 is a substrate binding site. N197 is an NAD(+) binding site. Substrate contacts are provided by residues 206–207 (KL), 222–224 (PIY), R231, N266, and 296–300 (DRPGH).

The protein belongs to the NAD(P)-dependent epimerase/dehydratase family. dTDP-glucose dehydratase subfamily. As to quaternary structure, homodimer. NAD(+) serves as cofactor.

It catalyses the reaction dTDP-alpha-D-glucose = dTDP-4-dehydro-6-deoxy-alpha-D-glucose + H2O. Its pathway is carbohydrate biosynthesis; dTDP-L-rhamnose biosynthesis. It participates in bacterial outer membrane biogenesis; LPS O-antigen biosynthesis. Catalyzes the dehydration of dTDP-D-glucose to form dTDP-6-deoxy-D-xylo-4-hexulose via a three-step process involving oxidation, dehydration and reduction. This Escherichia coli (strain K12) protein is dTDP-glucose 4,6-dehydratase 1 (rfbB).